The sequence spans 82 residues: MDFMNFFILGADLPTLGGVKGWASDVVIQFITIVVMFIAAKNLMKLKMGGIIFVCCIGSAVTWVIKHWSEFSGWINALMEKL.

2 helical membrane passes run 22 to 39 (WASD…MFIA) and 46 to 65 (LKMG…TWVI).

The protein localises to the cell membrane. This is an uncharacterized protein from Bacillus subtilis (strain 168).